Reading from the N-terminus, the 258-residue chain is UPF0246 protein YaaA (258 aa).

This sequence belongs to the UPF0246 family.

The chain is UPF0246 protein YaaA from Escherichia coli O157:H7 (strain EC4115 / EHEC).